The following is a 391-amino-acid chain: Cilia- and flagella-associated protein 263 (391 aa).

The interval 1 to 21 (MTDDDSETSASETQAQEESDL) is disordered. Coiled coils occupy residues 95-243 (LSVD…NQEL) and 294-369 (LRKE…LKGY).

The protein belongs to the CFAP263 family. In terms of assembly, forms a complex with CFAP184; the interaction is required for functional activity in cilia. Interacts with HAP1 and PCM1.

The protein resides in the cytoplasm. It localises to the cytoskeleton. It is found in the microtubule organizing center. Its subcellular location is the centrosome. The protein localises to the centriolar satellite. The protein resides in the cell projection. It localises to the cilium. In terms of biological role, component of centriolar satellites contributing to primary cilium formation. In complex with CFAP263, acts as a regulator of ciliary beating that connects radial spoke 3 (RS3) to the inner dynein arm (IDA) and the nexin-dynein regulatory complex (N-DRC). The complex is positioned parallel to N-DRC and forms a connection between the arch at the base of RS3, the IDA tail and N-DRC. The sequence is that of Cilia- and flagella-associated protein 263 (CFAP263) from Bos taurus (Bovine).